The sequence spans 119 residues: Large ribosomal subunit protein bL19 (119 aa).

It belongs to the bacterial ribosomal protein bL19 family.

In terms of biological role, this protein is located at the 30S-50S ribosomal subunit interface and may play a role in the structure and function of the aminoacyl-tRNA binding site. The sequence is that of Large ribosomal subunit protein bL19 from Limosilactobacillus reuteri (strain DSM 20016) (Lactobacillus reuteri).